The sequence spans 1156 residues: Protein hu-li tai shao (1156 aa).

A disordered region spans residues 1 to 36 (MTEVEQPPQNGIDPTAGEDDDNSKARPADIEQDMRE). Residues 22–36 (NSKARPADIEQDMRE) are compositionally biased toward basic and acidic residues. The residue at position 478 (Ser-478) is a Phosphoserine. Phosphothreonine is present on residues Thr-480 and Thr-498. Ser-603 carries the post-translational modification Phosphoserine. At Tyr-608 the chain carries Phosphotyrosine. Phosphothreonine is present on residues Thr-609 and Thr-611. Ser-614 is modified (phosphoserine). At Tyr-627 the chain carries Phosphotyrosine. At Ser-630 the chain carries Phosphoserine. The interval 897-956 (FLPSNHALPKDTDANNRDQTDRERPEAEQEESFHCAGDSGIGDSTGRRPRLATTSNDSSI) is disordered. A compositionally biased stretch (basic and acidic residues) spans 904 to 929 (LPKDTDANNRDQTDRERPEAEQEESF).

Belongs to the aldolase class II family. Adducin subfamily. Isoform C is expressed in nurse cells. Isoform A is produced in the nurse cell but transported into the oocyte at stage 1, localizes to the oocyte cortex at stage 8 and to the anterior pole from day 9 onwards. Isoform B is expressed in the somatic follicle cells that surround the germline.

It localises to the cytoplasm. The protein localises to the cytoskeleton. It is found in the cell membrane. Functionally, required for assembling actin at ring canals in developing egg chambers. Probably interacts with other developmental proteins involved in nurse cell/oocyte transport through the ring canals. Important for normal neuromotor function. The sequence is that of Protein hu-li tai shao (hts) from Drosophila melanogaster (Fruit fly).